The primary structure comprises 630 residues: Molybdenum cofactor biosynthesis protein 1 (630 aa).

Residues 61-298 form the Radical SAM core domain; sequence RFNRHHTYLR…SKTYHVPGFK (238 aa). Residue Arg70 coordinates GTP. [4Fe-4S] cluster is bound by residues Cys77 and Cys81. Tyr83 lines the S-adenosyl-L-methionine pocket. Cys84 serves as a coordination point for [4Fe-4S] cluster. Arg120 lines the GTP pocket. Gly124 is a binding site for S-adenosyl-L-methionine. Residue Thr151 participates in GTP binding. Residue Ser175 coordinates S-adenosyl-L-methionine. GTP is bound at residue Lys212. Met246 lines the S-adenosyl-L-methionine pocket. 2 residues coordinate [4Fe-4S] cluster: Cys312 and Cys315. 317-319 provides a ligand contact to GTP; it reads RLR. [4Fe-4S] cluster is bound at residue Cys329. The molybdenum cofactor biosynthesis protein C stretch occupies residues 402–629; it reads KEVKNYLLKL…GGKSSSPQIT (228 aa). Asp599 serves as the catalytic For molybdenum cofactor biosynthesis protein C activity.

In the C-terminal section; belongs to the MoaC family. The protein in the N-terminal section; belongs to the radical SAM superfamily. MoaA family. In terms of assembly, isoform mocs1a and isoform mocs1b probably form a heterooligomer. [4Fe-4S] cluster serves as cofactor.

The catalysed reaction is GTP + AH2 + S-adenosyl-L-methionine = (8S)-3',8-cyclo-7,8-dihydroguanosine 5'-triphosphate + 5'-deoxyadenosine + L-methionine + A + H(+). It carries out the reaction (8S)-3',8-cyclo-7,8-dihydroguanosine 5'-triphosphate = cyclic pyranopterin phosphate + diphosphate. It participates in cofactor biosynthesis; molybdopterin biosynthesis. Its function is as follows. Isoform mocs1a and isoform mocs1b probably form a complex that catalyzes the conversion of 5'-GTP to cyclic pyranopterin monophosphate (cPMP). mocs1a catalyzes the cyclization of GTP to (8S)-3',8-cyclo-7,8-dihydroguanosine 5'-triphosphate and mocs1b catalyzes the subsequent conversion of (8S)-3',8-cyclo-7,8-dihydroguanosine 5'-triphosphate to cPMP. The chain is Molybdenum cofactor biosynthesis protein 1 (mocs1) from Dictyostelium discoideum (Social amoeba).